The chain runs to 202 residues: Syndecan-4 (202 aa).

Residues 1 to 23 form the signal peptide; sequence MAPVCLFAPLLLLLLGGFPVAPG. Over 24–149 the chain is Extracellular; that stretch reads ESIRETEVID…QGSNIFERTE (126 aa). Disordered stretches follow at residues 42–76 and 89–138; these read YFSG…TEEP and LDNH…MSST. O-linked (Xyl...) (glycosaminoglycan) serine glycosylation occurs at S44. The span at 48–62 shows a compositional bias: acidic residues; it reads PDDEDAGGLEQDSDF. O-linked (Xyl...) (glycosaminoglycan) serine glycosylation is found at S65 and S67. The span at 105 to 121 shows a compositional bias: basic and acidic residues; sequence SEPKELEENEVIPKRVP. Residues 150–174 form a helical membrane-spanning segment; that stretch reads VLAALIVGGVVGILFAVFLILLLVY. At 175-202 the chain is on the cytoplasmic side; sequence RMKKKDEGSYDLGKKPIYKKAPTNEFYA.

Belongs to the syndecan proteoglycan family. In terms of assembly, homodimer. Interacts with CDCP1 and SDCBP. Interacts (via its cytoplasmic domain) with GIPC (via its PDZ domain). Interacts (via its cytoplasmic domain) with NUDT16L1. Interacts with DNM2; this interaction is markedly enhanced at focal ahesion site upon induction of focal adhesions and stress-fiber formation. Post-translationally, shedding is enhanced by a number of factors such as heparanase, thrombin or EGF. Also by stress and wound healing. PMA-mediated shedding is inhibited by TIMP3. O-glycosylated; contains both chondroitin sulfate and heparan sulfate. Ser-44, Ser-65 and Ser-67 can all be modified by either chondroitin sulfate or heparan sulfate, and the protein exists in forms that contain only chondroitin sulfate, only heparan sulfate and both chondroitin sulfate and heparan sulfate.

It localises to the membrane. It is found in the secreted. In terms of biological role, cell surface proteoglycan which regulates exosome biogenesis in concert with SDCBP and PDCD6IP. This Rattus norvegicus (Rat) protein is Syndecan-4.